The primary structure comprises 60 residues: Andropin (60 aa).

The N-terminal stretch at Met1 to Ala23 is a signal peptide.

Belongs to the andropin family. In terms of tissue distribution, ejaculatory duct of adult males.

Its subcellular location is the secreted. Its function is as follows. Male-specific peptide with moderate activity against Gram-positive bacteria. The chain is Andropin (Anp) from Drosophila simulans (Fruit fly).